A 1013-amino-acid chain; its full sequence is Sodium/potassium-transporting ATPase subunit alpha-3 (1013 aa).

The segment covering 1–10 (MGDKKDDKSS) has biased composition (basic and acidic residues). Residues 1–24 (MGDKKDDKSSPKKSKAKERRDLDD) are disordered. Over 1–77 (MGDKKDDKSS…NALTPPPTTP (77 aa)) the chain is Cytoplasmic. Phosphoserine occurs at positions 37 and 56. The interaction with phosphoinositide-3 kinase stretch occupies residues 72–74 (PPP). A helical membrane pass occupies residues 78–98 (EWVKFCRQLFGGFSILLWIGA). Residues 99 to 121 (ILCFLAYGIQAGTEDDPSGDNLY) lie on the Extracellular side of the membrane. Residues 122–142 (LGIVLAAVVIITGCFSYYQEA) form a helical membrane-spanning segment. At 143 to 278 (KSSKIMESFK…VGKTPIAIEI (136 aa)) the chain is on the cytoplasmic side. Serine 218 and serine 265 each carry phosphoserine. A helical transmembrane segment spans residues 279–298 (EHFIQLITGVAVFLGVSFFI). Residues 299–310 (LSLILGYTWLEA) are Extracellular-facing. The helical transmembrane segment at 311–328 (VIFLIGIIVANVPEGLLA) threads the bilayer. The Cytoplasmic segment spans residues 329-762 (TVTVCLTLTA…EEGRLIFDNL (434 aa)). Aspartate 366 functions as the 4-aspartylphosphate intermediate in the catalytic mechanism. The residue at position 442 (serine 442) is a Phosphoserine. Tyrosine 548 carries the phosphotyrosine modification. Residues aspartate 707 and aspartate 711 each contribute to the Mg(2+) site. Residues 763 to 782 (KKSIAYTLTSNIPEITPFLL) form a helical membrane-spanning segment. Residues 783–792 (FIMANIPLPL) lie on the Extracellular side of the membrane. A helical membrane pass occupies residues 793-813 (GTITILCIDLGTDMVPAISLA). Over 814–833 (YEAAESDIMKRQPRNPRTDK) the chain is Cytoplasmic. Residues 834–856 (LVNERLISMAYGQIGMIQALGGF) traverse the membrane as a helical segment. At 857–908 (FSYFVILAENGFLPGNLVGIRLNWDDRTVNDLEDSYGQQWTYEQRKVVEFTC) the chain is on the extracellular side. The chain crosses the membrane as a helical span at residues 909-928 (HTAFFVSIVVVQWADLIICK). Over 929–941 (TRRNSVFQQGMKN) the chain is Cytoplasmic. The residue at position 933 (serine 933) is a Phosphoserine; by PKA. A helical membrane pass occupies residues 942–960 (KILIFGLFEETALAAFLSY). The Extracellular segment spans residues 961–975 (CPGMDVALRMYPLKP). Residues 976 to 996 (SWWFCAFPYSFLIFVYDEIRK) form a helical membrane-spanning segment. The Cytoplasmic segment spans residues 997–1013 (LILRRNPGGWVEKETYY).

The protein belongs to the cation transport ATPase (P-type) (TC 3.A.3) family. Type IIC subfamily. The sodium/potassium-transporting ATPase is composed of a catalytic alpha subunit, an auxiliary non-catalytic beta subunit and an additional regulatory subunit. Interacts with regulatory subunit FXYD1.

Its subcellular location is the cell membrane. The enzyme catalyses K(+)(out) + Na(+)(in) + ATP + H2O = K(+)(in) + Na(+)(out) + ADP + phosphate + H(+). This is the catalytic component of the active enzyme, which catalyzes the hydrolysis of ATP coupled with the exchange of sodium and potassium ions across the plasma membrane. This action creates the electrochemical gradient of sodium and potassium ions, providing the energy for active transport of various nutrients. The chain is Sodium/potassium-transporting ATPase subunit alpha-3 (Atp1a3) from Mus musculus (Mouse).